We begin with the raw amino-acid sequence, 105 residues long: Gastrin/cholecystokinin-like peptide (105 aa).

Positions 1–20 (MKTKVFLGLILSAAVTACLC) are cleaved as a signal peptide. A propeptide spanning residues 21–38 (RPAAKAPGGSHRPTSSLA) is cleaved from the precursor. Residues 24-51 (AKAPGGSHRPTSSLARRDWPEPPSQEQQ) form a disordered region. Y87 is modified (sulfotyrosine). At F93 the chain carries Phenylalanine amide. Residues 97 to 105 (STEDAADAA) constitute a propeptide that is removed on maturation.

This sequence belongs to the gastrin/cholecystokinin family.

It localises to the secreted. Its function is as follows. Potent stimulus of gastric acid, but not of pancreatic secretion. This is Gastrin/cholecystokinin-like peptide from Gallus gallus (Chicken).